A 168-amino-acid chain; its full sequence is Desumoylating isopeptidase 1 (168 aa).

The region spanning 7 to 149 is the PPPDE domain; sequence YPVKLYVYDL…FGQALRPFLD (143 aa). His38 is an active-site residue. A Nuclear export signal 1 motif is present at residues 83–91; sequence IFLEYLSSL. Residue Cys108 is part of the active site. Positions 139–153 match the Nuclear export signal 2 motif; that stretch reads PFGQALRPFLDSIQI.

Belongs to the DeSI family. In terms of assembly, homodimer. Interacts with UBQLN4; leading to the export of UBQLN4 from the nucleus.

It is found in the cytoplasm. Its subcellular location is the nucleus. The catalysed reaction is S-hexadecanoyl-L-cysteinyl-[protein] + H2O = L-cysteinyl-[protein] + hexadecanoate + H(+). In terms of biological role, protease which deconjugates SUMO1, SUMO2 and SUMO3 from some substrate proteins. Has isopeptidase but not SUMO-processing activity. Desumoylates ZBTB46. Collaborates with UBQLN4 in the export of ubiquitinated proteins from the nucleus to the cytoplasm. Exhibits palmitoyl protein thioesterase (S-depalmitoylation) activity towards synthetic substrates 4-methylumbelliferyl-6-S-palmitoyl-beta-D-glucopyranoside and S-depalmitoylation probe 5 (DPP-5). This is Desumoylating isopeptidase 1 (Desi1) from Rattus norvegicus (Rat).